The chain runs to 247 residues: DNA repair protein RecO (247 aa).

This sequence belongs to the RecO family.

Functionally, involved in DNA repair and RecF pathway recombination. This chain is DNA repair protein RecO, found in Brucella abortus (strain 2308).